The chain runs to 274 residues: Reaction center protein L chain (274 aa).

Residues 2 to 32 (ALLSFERKYRVRGGTLIGGDLFDFWVGPYFV) are Cytoplasmic-facing. Residues 33–53 (GFFGVSAIFFIFLGVSLIGYA) form a helical membrane-spanning segment. Residues 54 to 83 (ASQGPTWDPFAISINPPDLKYGLGAAPLLE) are Periplasmic-facing. Residues 84-111 (GGFWQAITVCALGAFISWMLREVEISRK) form a helical membrane-spanning segment. The Cytoplasmic segment spans residues 112–115 (LGIG). A helical membrane pass occupies residues 116–139 (WHVPLAFCVPIFMFCVLQVFRPLL). The Periplasmic portion of the chain corresponds to 140 to 170 (LGSWGHAFPYGILSHLDWVNNFGYQYLNWHY). His-154 and His-174 together coordinate (7R,8Z)-bacteriochlorophyll b. The helical transmembrane segment at 171–198 (NPGHMSSVSFLFVNAMALGLHGGLILSV) threads the bilayer. His-191 serves as a coordination point for Fe cation. Residues 199 to 225 (ANPGDGDKVKTAEHENQYFRDVVGYSI) lie on the Cytoplasmic side of the membrane. A ubiquinone is bound at residue Phe-217. A helical transmembrane segment spans residues 226–249 (GALSIHRLGLFLASNIFLTGAFGT). His-231 is a Fe cation binding site. The Periplasmic segment spans residues 250–274 (IASGPFWTRGWPEWWGWWLDIPFWS).

The protein belongs to the reaction center PufL/M/PsbA/D family. In terms of assembly, reaction center is composed of four bacteriochlorophylls, two bacteriopheophytins, two ubiquinones, one iron, and three highly hydrophobic polypeptide chains (designated L, M, and H).

It is found in the cellular chromatophore membrane. Functionally, the reaction center is a membrane-bound complex that mediates the initial photochemical event in the electron transfer process of photosynthesis. The protein is Reaction center protein L chain (pufL) of Blastochloris viridis (Rhodopseudomonas viridis).